Here is a 487-residue protein sequence, read N- to C-terminus: Beta-barrel assembly-enhancing protease (487 aa).

Positions 1 to 27 (MFRQLKKNLVATLIAAMTIGQVAPAFA) are cleaved as a signal peptide. H136 is a Zn(2+) binding site. E137 is a catalytic residue. Residues H140 and E201 each contribute to the Zn(2+) site. The active-site Proton donor is the D205. TPR repeat units follow at residues 309 to 342 (RAAQYGRALQAMEANKYDEARKTLQPLLAAEPGN), 344 to 376 (WYLDLATDIDLGQNKANEAINRLKNARDLRTNP), 377 to 409 (VLQLNLANAYLQGGQPQEAANILNRYTFNNKDD), and 427 to 460 (DQELAARAEGYALAGRLDQAISLLSSASSQVKLG).

It belongs to the peptidase M48 family. BepA subfamily. It depends on Zn(2+) as a cofactor.

It is found in the periplasm. Its function is as follows. Functions both as a chaperone and a metalloprotease. Maintains the integrity of the outer membrane by promoting either the assembly or the elimination of outer membrane proteins, depending on their folding state. In Escherichia coli O157:H7, this protein is Beta-barrel assembly-enhancing protease.